The primary structure comprises 100 residues: Urease subunit gamma (100 aa).

This sequence belongs to the urease gamma subunit family. In terms of assembly, heterotrimer of UreA (gamma), UreB (beta) and UreC (alpha) subunits. Three heterotrimers associate to form the active enzyme.

It localises to the cytoplasm. It carries out the reaction urea + 2 H2O + H(+) = hydrogencarbonate + 2 NH4(+). It participates in nitrogen metabolism; urea degradation; CO(2) and NH(3) from urea (urease route): step 1/1. The sequence is that of Urease subunit gamma from Streptomyces avermitilis (strain ATCC 31267 / DSM 46492 / JCM 5070 / NBRC 14893 / NCIMB 12804 / NRRL 8165 / MA-4680).